The following is a 328-amino-acid chain: Carbonic anhydrase-related protein 11 (328 aa).

The N-terminal stretch at 1–23 (MGAAARLSAPRALVLWAALGAAA) is a signal peptide. Residues 33–303 (DWWSYKDNLQ…LAHRALRGNR (271 aa)) form the Alpha-carbonic anhydrase domain. N-linked (GlcNAc...) asparagine glycans are attached at residues Asn118, Asn170, and Asn260. Residues 299–328 (LRGNRDPRHPERRCRGPNYRLHVDGVPHGR) form a disordered region. Over residues 319–328 (LHVDGVPHGR) the composition is skewed to basic and acidic residues.

Belongs to the alpha-carbonic anhydrase family. In terms of tissue distribution, expressed abundantly in the brain with moderate expression also present in spinal cord and thyroid.

The protein resides in the secreted. Its function is as follows. Does not have a catalytic activity. This chain is Carbonic anhydrase-related protein 11 (CA11), found in Homo sapiens (Human).